The chain runs to 159 residues: Eukaryotic translation initiation factor 5A-1 (159 aa).

Residues 1 to 12 show a composition bias toward basic and acidic residues; that stretch reads MSDEEHHFESKA. The segment at 1–23 is disordered; it reads MSDEEHHFESKADAGASKTYPQQ. K52 carries the post-translational modification Hypusine.

It belongs to the eIF-5A family. Lys-52 undergoes hypusination, a unique post-translational modification that consists in the addition of a butylamino group from spermidine to lysine side chain, leading to the formation of the unusual amino acid hypusine. eIF-5As are the only known proteins to undergo this modification, which is essential for their function.

Translation factor that promotes translation elongation and termination, particularly upon ribosome stalling at specific amino acid sequence contexts. Binds between the exit (E) and peptidyl (P) site of the ribosome and promotes rescue of stalled ribosome: specifically required for efficient translation of polyproline-containing peptides as well as other motifs that stall the ribosome. Acts as a ribosome quality control (RQC) cofactor by joining the RQC complex to facilitate peptidyl transfer during CAT tailing step. The sequence is that of Eukaryotic translation initiation factor 5A-1 (EIF-5A1) from Nicotiana plumbaginifolia (Leadwort-leaved tobacco).